Consider the following 625-residue polypeptide: tRNA uridine 5-carboxymethylaminomethyl modification enzyme MnmG (625 aa).

Residues 13–18 (GGGHAG), Val125, and Ser182 contribute to the FAD site. Position 276–290 (276–290 (GPRYCPSIEDKITRF)) interacts with NAD(+). Residue Gln373 coordinates FAD.

This sequence belongs to the MnmG family. As to quaternary structure, homodimer. Heterotetramer of two MnmE and two MnmG subunits. Requires FAD as cofactor.

It is found in the cytoplasm. Functionally, NAD-binding protein involved in the addition of a carboxymethylaminomethyl (cmnm) group at the wobble position (U34) of certain tRNAs, forming tRNA-cmnm(5)s(2)U34. This Lactococcus lactis subsp. lactis (strain IL1403) (Streptococcus lactis) protein is tRNA uridine 5-carboxymethylaminomethyl modification enzyme MnmG.